The following is a 297-amino-acid chain: Putative thiosulfate sulfurtransferase SseA (297 aa).

Rhodanese domains lie at 31–138 (GAPG…ETTL) and 168–286 (ILDA…VPIV). Catalysis depends on Cys245, which acts as the Cysteine persulfide intermediate. Substrate is bound at residue Arg250.

It carries out the reaction thiosulfate + hydrogen cyanide = thiocyanate + sulfite + 2 H(+). The polypeptide is Putative thiosulfate sulfurtransferase SseA (sseA) (Mycobacterium bovis (strain ATCC BAA-935 / AF2122/97)).